A 201-amino-acid chain; its full sequence is Recombination protein RecR (201 aa).

Residues Cys57–Cys72 form a C4-type zinc finger. The 96-residue stretch at Gly81 to Pro176 folds into the Toprim domain.

This sequence belongs to the RecR family.

Functionally, may play a role in DNA repair. It seems to be involved in an RecBC-independent recombinational process of DNA repair. It may act with RecF and RecO. This is Recombination protein RecR from Edwardsiella ictaluri (strain 93-146).